A 146-amino-acid polypeptide reads, in one-letter code: Globin (146 aa).

Alanine 1 carries the N-acetylalanine modification. The 146-residue stretch at alanine 1–serine 146 folds into the Globin domain. Residues histidine 65 and histidine 97 each coordinate heme b.

The protein belongs to the globin family. As to quaternary structure, homodimer.

The protein is Globin of Buccinum undatum (Common whelk).